The following is a 236-amino-acid chain: E3 ubiquitin-protein ligase ATL41 (236 aa).

A helical membrane pass occupies residues 31-51 (IMLAAVASLSGVILIVFALHL). The segment at 108 to 150 (CAVCLSVLKEQDKARELPNCKHIFHVDCVDTWLTTCSTCPVCR) adopts an RING-type; atypical zinc-finger fold.

The protein belongs to the RING-type zinc finger family. ATL subfamily.

It localises to the membrane. The enzyme catalyses S-ubiquitinyl-[E2 ubiquitin-conjugating enzyme]-L-cysteine + [acceptor protein]-L-lysine = [E2 ubiquitin-conjugating enzyme]-L-cysteine + N(6)-ubiquitinyl-[acceptor protein]-L-lysine.. It participates in protein modification; protein ubiquitination. Its function is as follows. E3 ubiquitin-protein ligase able to catalyze polyubiquitination with ubiquitin-conjugating enzyme E2 UBC8, UBC10, UBC11, UBC28, UBC29, UBC30, UBC35 and UBC36 in vitro. The protein is E3 ubiquitin-protein ligase ATL41 (ATL41) of Arabidopsis thaliana (Mouse-ear cress).